A 1374-amino-acid polypeptide reads, in one-letter code: DNA-directed RNA polymerase subunit beta (1374 aa).

It belongs to the RNA polymerase beta chain family. As to quaternary structure, the RNAP catalytic core consists of 2 alpha, 1 beta, 1 beta' and 1 omega subunit. When a sigma factor is associated with the core the holoenzyme is formed, which can initiate transcription.

The catalysed reaction is RNA(n) + a ribonucleoside 5'-triphosphate = RNA(n+1) + diphosphate. Its function is as follows. DNA-dependent RNA polymerase catalyzes the transcription of DNA into RNA using the four ribonucleoside triphosphates as substrates. This Methylobacterium nodulans (strain LMG 21967 / CNCM I-2342 / ORS 2060) protein is DNA-directed RNA polymerase subunit beta.